The following is a 611-amino-acid chain: Alpha-1,2-mannosyltransferase ALG9 (611 aa).

Over residues 1-10 the composition is skewed to basic residues; that stretch reads MASRRARQRL. The disordered stretch occupies residues 1-51; the sequence is MASRRARQRLKGGGGGGGGGGDAGPAAEKLEQLGSREAGAEPRPESGNKAG. Residues 1 to 135 lie on the Lumenal side of the membrane; that stretch reads MASRRARQRL…FHARILQTNK (135 aa). Gly residues predominate over residues 11 to 23; it reads KGGGGGGGGGGDA. An N-linked (GlcNAc...) asparagine glycan is attached at N77. The helical transmembrane segment at 136-156 threads the bilayer; sequence ILVFYFLRCLLAFVSCVCELY. Topologically, residues 157–171 are cytoplasmic; that stretch reads FYKAVCKKFGLHVSR. A helical membrane pass occupies residues 172 to 192; sequence MMLAFLVLSTGMFCSSSAFLP. Residues 193–213 are Lumenal-facing; the sequence is SSFCMYTTLIAMTGWYMDKTP. Residues 214–234 traverse the membrane as a helical segment; the sequence is IAVLGVAAGAILGWPFSAALG. Residues 235 to 249 lie on the Cytoplasmic side of the membrane; sequence LPIAFDLLARKHRWK. A helical transmembrane segment spans residues 250 to 270; it reads SFLLWSLVALALFLVPVVVID. Topologically, residues 271 to 310 are lumenal; the sequence is SYYYGKLVVAPLNIVLYNVFTSHGPDLYGTEPWYFYLING. A helical transmembrane segment spans residues 311–331; sequence FLNFNVAFALALLVLPLTFLM. Residues 332–342 lie on the Cytoplasmic side of the membrane; it reads EYLLQRFHVQN. A helical transmembrane segment spans residues 343–363; sequence LGHPYWLTLAPMYIWFIIFFI. At 364–370 the chain is on the lumenal side; sequence QPHKEER. A helical transmembrane segment spans residues 371 to 391; it reads FLFPVYPLICLCGAVALSALQ. The Cytoplasmic portion of the chain corresponds to 392 to 405; sequence KCYHFVFQRYRLEH. Residues 406 to 426 form a helical membrane-spanning segment; it reads YTVTSNWLALGTVFLFGLLSF. Topologically, residues 427–611 are lumenal; that stretch reads SRSVALFRGY…AKPSRKKSGG (185 aa). N-linked (GlcNAc...) asparagine glycosylation is found at N550 and N593.

The protein belongs to the glycosyltransferase 22 family.

It localises to the endoplasmic reticulum membrane. The catalysed reaction is an alpha-D-Man-(1-&gt;2)-alpha-D-Man-(1-&gt;2)-alpha-D-Man-(1-&gt;3)-[alpha-D-Man-(1-&gt;3)-alpha-D-Man-(1-&gt;6)]-beta-D-Man-(1-&gt;4)-beta-D-GlcNAc-(1-&gt;4)-alpha-D-GlcNAc-diphospho-di-trans,poly-cis-dolichol + a di-trans,poly-cis-dolichyl beta-D-mannosyl phosphate = an alpha-D-Man-(1-&gt;2)-alpha-D-Man-(1-&gt;2)-alpha-D-Man-(1-&gt;3)-[alpha-D-Man-(1-&gt;2)-alpha-D-Man-(1-&gt;3)-alpha-D-Man-(1-&gt;6)]-beta-D-Man-(1-&gt;4)-beta-D-GlcNAc-(1-&gt;4)-alpha-D-GlcNAc-diphospho-di-trans,poly-cis-dolichol + a di-trans,poly-cis-dolichyl phosphate + H(+). It carries out the reaction an alpha-D-Man-(1-&gt;2)-alpha-D-Man-(1-&gt;2)-alpha-D-Man-(1-&gt;3)-[alpha-D-Man-(1-&gt;2)-alpha-D-Man-(1-&gt;3)-[alpha-D-Man-(1-&gt;6)]-alpha-D-Man-(1-&gt;6)]-beta-D-Man-(1-&gt;4)-beta-D-GlcNAc-(1-&gt;4)-alpha-D-GlcNAc-diphospho-di-trans,poly-cis-dolichol + a di-trans,poly-cis-dolichyl beta-D-mannosyl phosphate = an alpha-D-Man-(1-&gt;2)-alpha-D-Man-(1-&gt;2)-alpha-D-Man-(1-&gt;3)-[alpha-D-Man-(1-&gt;2)-alpha-D-Man-(1-&gt;3)-[alpha-D-Man-(1-&gt;2)-alpha-D-Man-(1-&gt;6)]-alpha-D-Man-(1-&gt;6)]-beta-D-Man-(1-&gt;4)-beta-D-GlcNAc-(1-&gt;4)-alpha-D-GlcNAc-diphospho-di-trans,poly-cis-dolichol + a di-trans,poly-cis-dolichyl phosphate + H(+). Its pathway is protein modification; protein glycosylation. Its function is as follows. Mannosyltransferase that operates in the biosynthetic pathway of dolichol-linked oligosaccharides, the glycan precursors employed in protein asparagine (N)-glycosylation. The assembly of dolichol-linked oligosaccharides begins on the cytosolic side of the endoplasmic reticulum membrane and finishes in its lumen. The sequential addition of sugars to dolichol pyrophosphate produces dolichol-linked oligosaccharides containing fourteen sugars, including two GlcNAcs, nine mannoses and three glucoses. Once assembled, the oligosaccharide is transferred from the lipid to nascent proteins by oligosaccharyltransferases. In the lumen of the endoplasmic reticulum, catalyzes the addition of the seventh and ninth alpha-1,2-linked mannose residues to Man(6)GlcNAc(2)-PP-dolichol and Man(8)GlcNAc(2)-PP-dolichol respectively. The polypeptide is Alpha-1,2-mannosyltransferase ALG9 (Mus musculus (Mouse)).